The primary structure comprises 213 residues: High frequency lysogenization protein HflD (213 aa).

Residues 99-126 (LSSAKGALDTLGNRINGLQRQLEHFDLQ) adopt a coiled-coil conformation.

Belongs to the HflD family. In terms of assembly, interacts with CII protein from phage lambda.

It is found in the cytoplasm. The protein resides in the cell inner membrane. Negative regulator of phage lambda lysogenization. Contributes to the degradation of the phage regulatory protein CII. Acts probably by holding CII on the membrane surface, away from the target promoters, but close to the FtsH protease. The protein is High frequency lysogenization protein HflD of Escherichia coli O157:H7.